Here is a 155-residue protein sequence, read N- to C-terminus: Small ribosomal subunit protein uS7c (155 aa).

Belongs to the universal ribosomal protein uS7 family. As to quaternary structure, part of the 30S ribosomal subunit.

Its subcellular location is the plastid. The protein localises to the chloroplast. Its function is as follows. One of the primary rRNA binding proteins, it binds directly to 16S rRNA where it nucleates assembly of the head domain of the 30S subunit. This chain is Small ribosomal subunit protein uS7c (rps7), found in Yucca glauca (Soapweed yucca).